The chain runs to 186 residues: Ribosome-recycling factor (186 aa).

It belongs to the RRF family.

Its subcellular location is the cytoplasm. Responsible for the release of ribosomes from messenger RNA at the termination of protein biosynthesis. May increase the efficiency of translation by recycling ribosomes from one round of translation to another. The polypeptide is Ribosome-recycling factor (Polaromonas sp. (strain JS666 / ATCC BAA-500)).